The sequence spans 117 residues: Modulator protein MzrA (117 aa).

The Cytoplasmic segment spans residues 1–11 (MMTNRRFRKPS). The chain crosses the membrane as a helical span at residues 12-29 (AWRLLLLLLPLVVLLSMS). Residues 30–117 (SRRLPDEVML…SNGTSPVTRS (88 aa)) lie on the Periplasmic side of the membrane.

It belongs to the MzrA family. As to quaternary structure, interacts with EnvZ.

It localises to the cell inner membrane. In terms of biological role, modulates the activity of the EnvZ/OmpR two-component regulatory system, probably by directly modulating EnvZ enzymatic activity and increasing stability of phosphorylated OmpR. The chain is Modulator protein MzrA from Dickeya dadantii (strain 3937) (Erwinia chrysanthemi (strain 3937)).